Reading from the N-terminus, the 127-residue chain is MAIVGLGTDIVEIERIEAHVARSGDKLARRVLTEAELAIYIAHSQPSRYLAKRFAAKEAAAKALGTGIGRGVSFQHIHIGNTPDGAPTIRFTDGAQQRLAFLNGIFGHISIADEKSYAIATVILESC.

2 residues coordinate Mg(2+): Asp-9 and Glu-58.

The protein belongs to the P-Pant transferase superfamily. AcpS family. Mg(2+) is required as a cofactor.

It is found in the cytoplasm. The enzyme catalyses apo-[ACP] + CoA = holo-[ACP] + adenosine 3',5'-bisphosphate + H(+). In terms of biological role, transfers the 4'-phosphopantetheine moiety from coenzyme A to a Ser of acyl-carrier-protein. The chain is Holo-[acyl-carrier-protein] synthase from Shewanella sp. (strain W3-18-1).